The following is a 115-amino-acid chain: MASSAVTKLALVVALCMAVSVAHAITCGQVTSSLAPCIGYVRSGGAVPPACCNGIRTINGLARTTADRQTACNCLKNLAGSISGVNPNNAAGLPGKCGVNVPYKISTSTNCATVK.

Residues 1 to 24 (MASSAVTKLALVVALCMAVSVAHA) form the signal peptide. Cystine bridges form between Cys27–Cys74, Cys37–Cys51, Cys52–Cys97, and Cys72–Cys111.

The protein belongs to the plant LTP family.

Its function is as follows. Plant non-specific lipid-transfer proteins transfer phospholipids as well as galactolipids across membranes. May play a role in wax or cutin deposition in the cell walls of expanding epidermal cells and certain secretory tissues. The polypeptide is Non-specific lipid-transfer protein (MALD3) (Malus domestica (Apple)).